The chain runs to 347 residues: NADH-ubiquinone oxidoreductase chain 2 (347 aa).

A run of 11 helical transmembrane segments spans residues 1–21 (MNPLAQPIIYSTIFAGTLITA), 25–45 (HWFLAWVGLEMNMLAFIPVLT), 55–75 (AAIKYFLVQATASMILMMAIL), 96–116 (LMILTALAMKLGMAPFHFWVP), 123–143 (TLTSGLLLLTWQKLAPISIMY), 145–165 (IFPVMNVNILLTFSILSIMVG), 178–198 (ILAYSSITHVGWMTAVLPYNP), 199–219 (NITIFNLTIYIVLTTTAFLAL), 237–257 (LTWLLPLIPSTLLSLGGLPPL), 274–294 (GTLIIPTIMAIVTLINLYFYM), and 324–344 (LLLPTLTILTTLLLPIAPLTF).

It belongs to the complex I subunit 2 family. As to quaternary structure, core subunit of respiratory chain NADH dehydrogenase (Complex I) which is composed of 45 different subunits. Interacts with TMEM242.

It localises to the mitochondrion inner membrane. The catalysed reaction is a ubiquinone + NADH + 5 H(+)(in) = a ubiquinol + NAD(+) + 4 H(+)(out). Core subunit of the mitochondrial membrane respiratory chain NADH dehydrogenase (Complex I) which catalyzes electron transfer from NADH through the respiratory chain, using ubiquinone as an electron acceptor. Essential for the catalytic activity and assembly of complex I. This Symphalangus syndactylus (Siamang) protein is NADH-ubiquinone oxidoreductase chain 2.